We begin with the raw amino-acid sequence, 223 residues long: Deoxyribose-phosphate aldolase 1 (223 aa).

Residue D91 is the Proton donor/acceptor of the active site. Residue K153 is the Schiff-base intermediate with acetaldehyde of the active site. K182 (proton donor/acceptor) is an active-site residue.

Belongs to the DeoC/FbaB aldolase family. DeoC type 1 subfamily.

It is found in the cytoplasm. It catalyses the reaction 2-deoxy-D-ribose 5-phosphate = D-glyceraldehyde 3-phosphate + acetaldehyde. Its pathway is carbohydrate degradation; 2-deoxy-D-ribose 1-phosphate degradation; D-glyceraldehyde 3-phosphate and acetaldehyde from 2-deoxy-alpha-D-ribose 1-phosphate: step 2/2. In terms of biological role, catalyzes a reversible aldol reaction between acetaldehyde and D-glyceraldehyde 3-phosphate to generate 2-deoxy-D-ribose 5-phosphate. The polypeptide is Deoxyribose-phosphate aldolase 1 (Yersinia pestis).